A 697-amino-acid chain; its full sequence is Elongation factor G (697 aa).

The tr-type G domain maps to 8-282 (EDYRNIGIMA…AIVDYLPSPL (275 aa)). GTP contacts are provided by residues 17–24 (AHIDAGKT), 81–85 (DTPGH), and 135–138 (NKMD).

Belongs to the TRAFAC class translation factor GTPase superfamily. Classic translation factor GTPase family. EF-G/EF-2 subfamily.

Its subcellular location is the cytoplasm. Its function is as follows. Catalyzes the GTP-dependent ribosomal translocation step during translation elongation. During this step, the ribosome changes from the pre-translocational (PRE) to the post-translocational (POST) state as the newly formed A-site-bound peptidyl-tRNA and P-site-bound deacylated tRNA move to the P and E sites, respectively. Catalyzes the coordinated movement of the two tRNA molecules, the mRNA and conformational changes in the ribosome. This Metamycoplasma arthritidis (strain 158L3-1) (Mycoplasma arthritidis) protein is Elongation factor G.